We begin with the raw amino-acid sequence, 146 residues long: 3-dehydroquinate dehydratase (146 aa).

Y22 acts as the Proton acceptor in catalysis. Substrate-binding residues include N73, H79, and D86. Catalysis depends on H99, which acts as the Proton donor. Residues 100 to 101 and R110 each bind substrate; that span reads IS.

The protein belongs to the type-II 3-dehydroquinase family. In terms of assembly, homododecamer.

The catalysed reaction is 3-dehydroquinate = 3-dehydroshikimate + H2O. It participates in metabolic intermediate biosynthesis; chorismate biosynthesis; chorismate from D-erythrose 4-phosphate and phosphoenolpyruvate: step 3/7. Its function is as follows. Catalyzes a trans-dehydration via an enolate intermediate. The polypeptide is 3-dehydroquinate dehydratase (Prochlorococcus marinus subsp. pastoris (strain CCMP1986 / NIES-2087 / MED4)).